The chain runs to 375 residues: Trichodiene synthase (375 aa).

It belongs to the trichodiene synthase family.

The catalysed reaction is (2E,6E)-farnesyl diphosphate = trichodiene + diphosphate. It functions in the pathway sesquiterpene biosynthesis; trichothecene biosynthesis. Its function is as follows. TS is a member of the terpene cyclase group of enzymes. It catalyzes the isomerization and cyclization of farnesyl pyro-phosphate to form trichodiene, the first cyclic intermediate in the biosynthetic pathway for trichothecenes. It serves to branch trichothecene biosynthesis from the isoprenoid pathway. The sequence is that of Trichodiene synthase (TRI5) from Fusarium boothii.